Reading from the N-terminus, the 497-residue chain is Glycerol kinase 2 (497 aa).

T13 lines the ADP pocket. ATP-binding residues include T13, T14, and S15. Residue T13 coordinates sn-glycerol 3-phosphate. R17 is an ADP binding site. Residues R83, E84, Y134, and D241 each contribute to the sn-glycerol 3-phosphate site. The glycerol site is built by R83, E84, Y134, D241, and Q242. ADP is bound by residues T263 and G305. Residues T263, G305, Q309, and G406 each coordinate ATP. The ADP site is built by G406 and N410.

This sequence belongs to the FGGY kinase family.

The enzyme catalyses glycerol + ATP = sn-glycerol 3-phosphate + ADP + H(+). It functions in the pathway polyol metabolism; glycerol degradation via glycerol kinase pathway; sn-glycerol 3-phosphate from glycerol: step 1/1. Functionally, key enzyme in the regulation of glycerol uptake and metabolism. Catalyzes the phosphorylation of glycerol to yield sn-glycerol 3-phosphate. This Sulfolobus acidocaldarius (strain ATCC 33909 / DSM 639 / JCM 8929 / NBRC 15157 / NCIMB 11770) protein is Glycerol kinase 2.